Here is a 342-residue protein sequence, read N- to C-terminus: Inactive chitinase-like protein 2 (342 aa).

Positions methionine 1–alanine 19 are cleaved as a signal peptide. The Chitin-binding type-1 domain occupies glutamate 20–glycine 60. Intrachain disulfides connect cysteine 22–cysteine 37, cysteine 31–cysteine 43, cysteine 36–cysteine 80, cysteine 84–cysteine 88, cysteine 122–cysteine 184, cysteine 196–cysteine 204, and cysteine 301–cysteine 333.

Belongs to the glycosyl hydrolase 19 family. Chitinase class I subfamily.

In terms of biological role, inactive chitinase-like protein that does not exhibit hydrolytic activity toward chitin. Binds strongly to chitin and possesses antifungal activity toward the fungal pathogen Altenaria alternata in plate assays. Probably involved in defense against fungal pathogens through a mechanism that only involves carbohydrate binding. The protein is Inactive chitinase-like protein 2 of Hevea brasiliensis (Para rubber tree).